Here is a 229-residue protein sequence, read N- to C-terminus: Lipoprotein-releasing system ATP-binding protein LolD 1 (229 aa).

The region spanning 2–229 is the ABC transporter domain; the sequence is LVVSELSKSY…VRRGRFGITA (228 aa). 38-45 is a binding site for ATP; it reads GPSGSGKT.

It belongs to the ABC transporter superfamily. Lipoprotein translocase (TC 3.A.1.125) family. As to quaternary structure, the complex is composed of two ATP-binding proteins (LolD) and two transmembrane proteins (LolC and LolE).

It is found in the cell inner membrane. In terms of biological role, part of the ABC transporter complex LolCDE involved in the translocation of mature outer membrane-directed lipoproteins, from the inner membrane to the periplasmic chaperone, LolA. Responsible for the formation of the LolA-lipoprotein complex in an ATP-dependent manner. This is Lipoprotein-releasing system ATP-binding protein LolD 1 from Rhodopirellula baltica (strain DSM 10527 / NCIMB 13988 / SH1).